We begin with the raw amino-acid sequence, 990 residues long: Storkhead-box protein 1 (990 aa).

A compositionally biased stretch (basic and acidic residues) spans 396-408 (TTRHKDSSKEVIG). Disordered stretches follow at residues 396 to 471 (TTRH…VHHL), 562 to 586 (VAKA…PRRV), 712 to 736 (GLSD…DGGC), and 809 to 832 (LFSN…SRIP). Residues 416-431 (KSRRRGSSHKGRHKAR) are compositionally biased toward basic residues. Residues 809–830 (LFSNAGESPNPDLSDNPGQNSR) show a composition bias toward polar residues.

In terms of tissue distribution, detected in sensory epithelial cells of the inner ear but not in adjacent surrounding tissue (at protein level).

Its subcellular location is the nucleus. It localises to the cytoplasm. The protein resides in the cytoskeleton. The protein localises to the microtubule organizing center. It is found in the centrosome. In terms of biological role, involved in regulating the levels of reactive oxidative species and reactive nitrogen species and in mitochondrial homeostasis in the placenta. Required for regulation of inner ear epithelial cell proliferation via the AKT signaling pathway. Involved in cell cycle regulation by binding to the CCNB1 promoter, up-regulating its expression and promoting mitotic entry. Induces phosphorylation of MAPT/tau. The protein is Storkhead-box protein 1 of Mus musculus (Mouse).